A 102-amino-acid chain; its full sequence is Small ribosomal subunit protein uS10 (102 aa).

This sequence belongs to the universal ribosomal protein uS10 family. Part of the 30S ribosomal subunit.

Its function is as follows. Involved in the binding of tRNA to the ribosomes. This chain is Small ribosomal subunit protein uS10, found in Ligilactobacillus salivarius (strain UCC118) (Lactobacillus salivarius).